The chain runs to 122 residues: Large ribosomal subunit protein uL14c (122 aa).

The protein belongs to the universal ribosomal protein uL14 family. As to quaternary structure, part of the 50S ribosomal subunit.

The protein localises to the plastid. Its subcellular location is the chloroplast. Functionally, binds to 23S rRNA. This Pleurastrum terricola (Filamentous green alga) protein is Large ribosomal subunit protein uL14c.